A 93-amino-acid chain; its full sequence is MARSIKKGPFIDDHLMKKVLKSKETKDNKPIKTWSRRSTIVPDMIGLTLNVHNGRAFVPVYVTENHVGYKLGEFAPTRTFKGHKGSVQKKIGK.

This sequence belongs to the universal ribosomal protein uS19 family.

Protein S19 forms a complex with S13 that binds strongly to the 16S ribosomal RNA. This Wolinella succinogenes (strain ATCC 29543 / DSM 1740 / CCUG 13145 / JCM 31913 / LMG 7466 / NCTC 11488 / FDC 602W) (Vibrio succinogenes) protein is Small ribosomal subunit protein uS19.